A 302-amino-acid chain; its full sequence is Beta-casein (302 aa).

Residues 1–15 form the signal peptide; it reads MKLLILTCLVALGFA. Phosphoserine occurs at positions 23 and 25. A run of 16 repeats spans residues 144–151, 152–159, 160–167, 168–175, 176–182, 183–190, 191–198, 199–204, 205–214, 215–222, 223–230, 231–238, 241–247, 248–255, 256–262, and 263–269. The 16 X approximate tandem repeats stretch occupies residues 144–269; it reads KREMLPIYER…LLPEEILPVN (126 aa).

It belongs to the beta-casein family. Mammary gland specific. Secreted in milk.

The protein resides in the secreted. Important role in determination of the surface properties of the casein micelles. In Notamacropus eugenii (Tammar wallaby), this protein is Beta-casein (CSN2).